The chain runs to 479 residues: uncharacterized protein (479 aa).

The next 8 membrane-spanning stretches (helical) occupy residues 25–45, 63–83, 110–130, 133–153, 175–195, 229–249, 287–307, and 328–348; these read VVFV…LFFF, IAMI…LAGG, LFGP…TVIF, GVFN…AGIL, VLSI…VLGI, ILLY…IVWL, LILN…IAFI, and LFAP…LLLL.

This sequence in the C-terminal section; belongs to the GatC family.

It is found in the cell membrane. This is an uncharacterized protein from Mycoplasma pneumoniae (strain ATCC 29342 / M129 / Subtype 1) (Mycoplasmoides pneumoniae).